A 506-amino-acid chain; its full sequence is Fe(3+)-transport system permease protein FbpB 2 (506 aa).

12 helical membrane-spanning segments follow: residues 9 to 29 (LTLLIILIGLPLCLPFLYVIL), 57 to 77 (LLMVCVTIGAISLGTFCAFLL), 90 to 110 (VAMTLPLCIPAFVSGFTWISL), 116 to 136 (VFWGTIGIMTLSSFPLAYLPV), 174 to 194 (IGSSILLIALHMLVEFGAVSI), 218 to 238 (ALLSAVLMAICILIVFGEIFF), 275 to 295 (IFILSIGVPVIMLIYWLIVGT), 314 to 334 (FIISGLGALLTVMCALPLVWA), 350 to 370 (PYLLHAVPGLVIALSLVYFSI), 379 to 399 (TFFVIIIAYFMLYLPMAQTTL), 428 to 448 (LTLPAILPGVAAAFALVFLNL), and 480 to 500 (AAATPYALMLVLFSGIPVFLL). Positions 52-233 (LSNTMLLMVC…LMAICILIVF (182 aa)) constitute an ABC transmembrane type-1 1 domain. Positions 310–500 (FSNSFIISGL…LFSGIPVFLL (191 aa)) constitute an ABC transmembrane type-1 2 domain.

The protein belongs to the binding-protein-dependent transport system permease family. FbpB subfamily. In terms of assembly, the complex is composed of two ATP-binding proteins (FbpC), two transmembrane proteins (FbpB) and a solute-binding protein (FbpA).

The protein localises to the cell inner membrane. Part of the ABC transporter complex FbpABC (TC 3.A.1.10.1) involved in Fe(3+) ions import. Probably responsible for the translocation of the substrate across the membrane. This is Fe(3+)-transport system permease protein FbpB 2 (fbpB2) from Haemophilus influenzae (strain ATCC 51907 / DSM 11121 / KW20 / Rd).